Here is a 392-residue protein sequence, read N- to C-terminus: Histidinol-phosphate aminotransferase (392 aa).

The interval 1-24 (MSAVLKDPIPAPGRPESTRPEPRP) is disordered. N6-(pyridoxal phosphate)lysine is present on K236.

The protein belongs to the class-II pyridoxal-phosphate-dependent aminotransferase family. Histidinol-phosphate aminotransferase subfamily. As to quaternary structure, homodimer. Requires pyridoxal 5'-phosphate as cofactor.

The catalysed reaction is L-histidinol phosphate + 2-oxoglutarate = 3-(imidazol-4-yl)-2-oxopropyl phosphate + L-glutamate. It participates in amino-acid biosynthesis; L-histidine biosynthesis; L-histidine from 5-phospho-alpha-D-ribose 1-diphosphate: step 7/9. This Xanthobacter autotrophicus (strain ATCC BAA-1158 / Py2) protein is Histidinol-phosphate aminotransferase.